The sequence spans 518 residues: Serine--tRNA ligase, mitochondrial (518 aa).

Residues 1–34 (MAASIVRRLGPLVAGRGLRLRGGCVCNQSFKRSF) constitute a mitochondrion transit peptide. Position 110 is an N6-acetyllysine (Lys-110). Lys-195 carries the N6-succinyllysine modification. An L-serine-binding site is contributed by 299–301 (TAE). An ATP-binding site is contributed by 330–332 (RAE). At Lys-337 the chain carries N6-succinyllysine. Val-345 contributes to the ATP binding site. Residue Glu-352 coordinates L-serine. An ATP-binding site is contributed by 418-421 (EVTS). Thr-453 serves as a coordination point for L-serine. A disordered region spans residues 497–518 (PLQYIGPNQPQKPRLPGQPASS).

This sequence belongs to the class-II aminoacyl-tRNA synthetase family. Type-1 seryl-tRNA synthetase subfamily. As to quaternary structure, homodimer. The tRNA molecule probably binds across the dimer. Two N-termini starting at positions 35 and 37 have been identified by direct sequencing.

The protein localises to the mitochondrion matrix. The enzyme catalyses tRNA(Ser) + L-serine + ATP = L-seryl-tRNA(Ser) + AMP + diphosphate + H(+). The catalysed reaction is tRNA(Sec) + L-serine + ATP = L-seryl-tRNA(Sec) + AMP + diphosphate + H(+). Its pathway is aminoacyl-tRNA biosynthesis; selenocysteinyl-tRNA(Sec) biosynthesis; L-seryl-tRNA(Sec) from L-serine and tRNA(Sec): step 1/1. Catalyzes the attachment of serine to tRNA(Ser). Is also probably able to aminoacylate tRNA(Sec) with serine, to form the misacylated tRNA L-seryl-tRNA(Sec), which will be further converted into selenocysteinyl-tRNA(Sec). The protein is Serine--tRNA ligase, mitochondrial (SARS2) of Bos taurus (Bovine).